The following is a 509-amino-acid chain: Lysine--tRNA ligase (509 aa).

Polar residues predominate over residues 1 to 18 (MSEQNPTQAAKQAPQQEL). Positions 1 to 20 (MSEQNPTQAAKQAPQQELND) are disordered. 2 residues coordinate Mg(2+): E418 and E425.

It belongs to the class-II aminoacyl-tRNA synthetase family. Homodimer. Requires Mg(2+) as cofactor.

It is found in the cytoplasm. It catalyses the reaction tRNA(Lys) + L-lysine + ATP = L-lysyl-tRNA(Lys) + AMP + diphosphate. In Psychromonas ingrahamii (strain DSM 17664 / CCUG 51855 / 37), this protein is Lysine--tRNA ligase.